The chain runs to 127 residues: Protein translocase subunit SecE (127 aa).

Residues 1–19 (MSANTEAQGSGRGLEAMKW) are Cytoplasmic-facing. A helical membrane pass occupies residues 20 to 32 (VVVVALLLVAIVG). Over 33-48 (NYLYRDIMLPLRALAV) the chain is Periplasmic. A helical membrane pass occupies residues 49–60 (VILIAAAGGVAL). At 61–97 (LTTKGKATVAFAREARTEVRKVIWPTRQETLHTTLIV) the chain is on the cytoplasmic side. A helical transmembrane segment spans residues 98–115 (AAVTAVMSLILWGLDGIL). Topologically, residues 116-127 (VRLVSFITGLRF) are periplasmic.

The protein belongs to the SecE/SEC61-gamma family. As to quaternary structure, component of the Sec protein translocase complex. Heterotrimer consisting of SecY, SecE and SecG subunits. The heterotrimers can form oligomers, although 1 heterotrimer is thought to be able to translocate proteins. Interacts with the ribosome. Interacts with SecDF, and other proteins may be involved. Interacts with SecA.

Its subcellular location is the cell inner membrane. Functionally, essential subunit of the Sec protein translocation channel SecYEG. Clamps together the 2 halves of SecY. May contact the channel plug during translocation. This is Protein translocase subunit SecE from Escherichia coli O157:H7.